Consider the following 414-residue polypeptide: Na(+)-translocating NADH-quinone reductase subunit B (414 aa).

The next 4 membrane-spanning stretches (helical) occupy residues 23-40 (WFAL…PGLV), 56-76 (IMIM…YNAG), 129-149 (FLPI…LFCM), and 164-184 (ILFA…LGIT). An FMN phosphoryl threonine modification is found at Thr-236. 5 helical membrane-spanning segments follow: residues 268-288 (IPGS…AMIV), 297-317 (IIAG…VIGS), 322-342 (MFSM…GMFF), 358-378 (WWYG…NPAY), and 381-401 (GMML…HLVV).

Belongs to the NqrB/RnfD family. In terms of assembly, composed of six subunits; NqrA, NqrB, NqrC, NqrD, NqrE and NqrF. Requires FMN as cofactor.

The protein localises to the cell inner membrane. The enzyme catalyses a ubiquinone + n Na(+)(in) + NADH + H(+) = a ubiquinol + n Na(+)(out) + NAD(+). Functionally, NQR complex catalyzes the reduction of ubiquinone-1 to ubiquinol by two successive reactions, coupled with the transport of Na(+) ions from the cytoplasm to the periplasm. NqrA to NqrE are probably involved in the second step, the conversion of ubisemiquinone to ubiquinol. This is Na(+)-translocating NADH-quinone reductase subunit B from Vibrio vulnificus (strain CMCP6).